The following is a 473-amino-acid chain: MKILYSLRRFYHVETLFNGTFVLAGRDQETTGFAWWAGNARLINLSGKLLGAHVAHAGLIVFWAGAMNLFEVAHFVPEKPMYEQGLILLPHLATLGWGVGPGGEVLDTFPYFVSGVLHLISSAVLGFGGIYHALLGPETLEESFPFFGYVWKDRNKMTTILGIHLILLGLGAFLLVLKALYFGGVYDTWAPGGGDVRKITNLTLSPSVIFGYLLKSPFGGEGWIVSVDDLEDIIGGHVWLGFICVFGGIWHILTKPFAWARRAFVWSGEAYLSYSLAALSVFGFIACCFVWFNNTAYPSEFYGPTGPEASQAQAFTFLVRDQRLGANVGSAQGPTGLGKYLMRSPTGEVIFGGETMRFWDLRAPWLEPLRGPNGLDLSRLKKDIQPWQERRSAEYMTHAPLGSLNSVGGVATEINAVNYVSPRSWLSTSHFVLGFFFFVGHLWHAGRARAAAAGFEKGIDRDLEPVLYMNPLN.

A propeptide spanning residues 1–14 (MKILYSLRRFYHVE) is cleaved from the precursor. N-acetylthreonine is present on Thr-15. Position 15 is a phosphothreonine (Thr-15). 5 consecutive transmembrane segments (helical) span residues 69-93 (LFEV…PHLA), 134-155 (LLGP…KDRN), 178-200 (KALY…RKIT), 255-275 (KPFA…LSYS), and 291-312 (WFNN…ASQA). Residue Glu-367 participates in [CaMn4O5] cluster binding. A helical transmembrane segment spans residues 447 to 471 (RARAAAAGFEKGIDRDLEPVLYMNP).

Belongs to the PsbB/PsbC family. PsbC subfamily. In terms of assembly, PSII is composed of 1 copy each of membrane proteins PsbA, PsbB, PsbC, PsbD, PsbE, PsbF, PsbH, PsbI, PsbJ, PsbK, PsbL, PsbM, PsbT, PsbX, PsbY, PsbZ, Psb30/Ycf12, at least 3 peripheral proteins of the oxygen-evolving complex and a large number of cofactors. It forms dimeric complexes. Binds multiple chlorophylls and provides some of the ligands for the Ca-4Mn-5O cluster of the oxygen-evolving complex. It may also provide a ligand for a Cl- that is required for oxygen evolution. PSII binds additional chlorophylls, carotenoids and specific lipids. serves as cofactor.

It localises to the plastid. The protein localises to the chloroplast thylakoid membrane. One of the components of the core complex of photosystem II (PSII). It binds chlorophyll and helps catalyze the primary light-induced photochemical processes of PSII. PSII is a light-driven water:plastoquinone oxidoreductase, using light energy to abstract electrons from H(2)O, generating O(2) and a proton gradient subsequently used for ATP formation. The polypeptide is Photosystem II CP43 reaction center protein (Hordeum vulgare (Barley)).